We begin with the raw amino-acid sequence, 323 residues long: Prenyl transferase (323 aa).

K46, R49, and H81 together coordinate isopentenyl diphosphate. Positions 88 and 92 each coordinate Mg(2+). R97 provides a ligand contact to an all-trans-polyprenyl diphosphate. R98 contributes to the isopentenyl diphosphate binding site. Residues K174, T175, and Q212 each coordinate an all-trans-polyprenyl diphosphate.

The protein belongs to the FPP/GGPP synthase family. Requires Mg(2+) as cofactor.

Possible role in synthesis of the nonaprenyl side chain of plastoquinone or in synthesis of other prenyl chains such as undekaprenyl pyrophosphate. This Synechocystis sp. (strain ATCC 27184 / PCC 6803 / Kazusa) protein is Prenyl transferase (preA).